Consider the following 131-residue polypeptide: ER membrane protein complex subunit 5 (131 aa).

Over 1-3 (MAP) the chain is Cytoplasmic. The chain crosses the membrane as a helical span at residues 4-22 (SLWKGLVGVGLFALAHAAF). Topologically, residues 23-43 (SAAQHRSYMRLTEKEDESLPI) are lumenal. A helical transmembrane segment spans residues 44 to 63 (DIVLQTLLAFAVTCYGIVHI). At 64–131 (AGEFKDMDAT…KLRKFDSLRR (68 aa)) the chain is on the cytoplasmic side. A Phosphoserine modification is found at S120.

Belongs to the membrane magnesium transporter (TC 1.A.67) family. As to quaternary structure, component of the ER membrane protein complex (EMC). In terms of tissue distribution, abundant in heart muscle and kidney with lower levels in liver and brain and very little expression in intestine or colon. In kidney, highest levels in distal convoluted tubule.

It localises to the endoplasmic reticulum membrane. The protein resides in the golgi apparatus membrane. Its subcellular location is the early endosome membrane. In terms of biological role, part of the endoplasmic reticulum membrane protein complex (EMC) that enables the energy-independent insertion into endoplasmic reticulum membranes of newly synthesized membrane proteins. Preferentially accommodates proteins with transmembrane domains that are weakly hydrophobic or contain destabilizing features such as charged and aromatic residues. Involved in the cotranslational insertion of multi-pass membrane proteins in which stop-transfer membrane-anchor sequences become ER membrane spanning helices. It is also required for the post-translational insertion of tail-anchored/TA proteins in endoplasmic reticulum membranes. By mediating the proper cotranslational insertion of N-terminal transmembrane domains in an N-exo topology, with translocated N-terminus in the lumen of the ER, controls the topology of multi-pass membrane proteins like the G protein-coupled receptors. By regulating the insertion of various proteins in membranes, it is indirectly involved in many cellular processes. May be involved Mg(2+) transport. The polypeptide is ER membrane protein complex subunit 5 (Mus musculus (Mouse)).